A 345-amino-acid chain; its full sequence is Anthranilate phosphoribosyltransferase (345 aa).

5-phospho-alpha-D-ribose 1-diphosphate-binding positions include G86, 89 to 90 (GD), T94, 96 to 99 (NIST), 114 to 122 (KHGNRNLSS), and A126. G86 contacts anthranilate. S98 is a Mg(2+) binding site. Position 117 (N117) interacts with anthranilate. Position 172 (R172) interacts with anthranilate. Residues D231 and E232 each coordinate Mg(2+).

It belongs to the anthranilate phosphoribosyltransferase family. In terms of assembly, homodimer. The cofactor is Mg(2+).

The enzyme catalyses N-(5-phospho-beta-D-ribosyl)anthranilate + diphosphate = 5-phospho-alpha-D-ribose 1-diphosphate + anthranilate. The protein operates within amino-acid biosynthesis; L-tryptophan biosynthesis; L-tryptophan from chorismate: step 2/5. Catalyzes the transfer of the phosphoribosyl group of 5-phosphorylribose-1-pyrophosphate (PRPP) to anthranilate to yield N-(5'-phosphoribosyl)-anthranilate (PRA). In Jannaschia sp. (strain CCS1), this protein is Anthranilate phosphoribosyltransferase.